A 190-amino-acid chain; its full sequence is Peptidyl-tRNA hydrolase (190 aa).

Phenylalanine 14 is a tRNA binding site. The active-site Proton acceptor is the histidine 19. Methionine 64, asparagine 66, and asparagine 112 together coordinate tRNA.

The protein belongs to the PTH family. Monomer.

The protein resides in the cytoplasm. The enzyme catalyses an N-acyl-L-alpha-aminoacyl-tRNA + H2O = an N-acyl-L-amino acid + a tRNA + H(+). Hydrolyzes ribosome-free peptidyl-tRNAs (with 1 or more amino acids incorporated), which drop off the ribosome during protein synthesis, or as a result of ribosome stalling. Its function is as follows. Catalyzes the release of premature peptidyl moieties from peptidyl-tRNA molecules trapped in stalled 50S ribosomal subunits, and thus maintains levels of free tRNAs and 50S ribosomes. The polypeptide is Peptidyl-tRNA hydrolase (Staphylococcus epidermidis (strain ATCC 35984 / DSM 28319 / BCRC 17069 / CCUG 31568 / BM 3577 / RP62A)).